The sequence spans 331 residues: Osmotic avoidance abnormal protein 8 (331 aa).

The signal sequence occupies residues 1–21 (MPAKMLKWLLIHIFLIHSIFC).

As to expression, expressed in the hypodermal syncitium but not in hypodermal seam cells.

Its subcellular location is the secreted. In terms of biological role, negative regulator of the osmotic stress response. Acts via the transmembrane protein ptr-23. This is Osmotic avoidance abnormal protein 8 (osm-8) from Caenorhabditis elegans.